The sequence spans 116 residues: MPKFNPKQMKDLERMLGLKTEQLNAVKVTIELQDKILVIDNPVVVKMLAQGQEVFSVMGSAREESKQQQKVEIKEEDVKFIMEQTGKSEKEAREALEKSNGDIAKAILALTEGENK.

An NAC-A/B domain is found at 6 to 70; sequence PKQMKDLERM…AREESKQQQK (65 aa).

The protein belongs to the NAC-alpha family. In terms of assembly, homodimer. Interacts with the ribosome. Binds ribosomal RNA.

Its function is as follows. Contacts the emerging nascent chain on the ribosome. In Sulfolobus acidocaldarius (strain ATCC 33909 / DSM 639 / JCM 8929 / NBRC 15157 / NCIMB 11770), this protein is Nascent polypeptide-associated complex protein.